The chain runs to 199 residues: NAD(P)H dehydrogenase (quinone) (199 aa).

The 187-residue stretch at 4 to 190 (VLVLYYSSYG…TGARYQGRKI (187 aa)) folds into the Flavodoxin-like domain. Residues 10-15 (SSYGHL) and 78-80 (TRF) contribute to the FMN site. An NAD(+)-binding site is contributed by Tyr12. Trp98 is a binding site for substrate. FMN is bound by residues 113-119 (STATQHG) and His134.

Belongs to the WrbA family. FMN serves as cofactor.

The enzyme catalyses a quinone + NADH + H(+) = a quinol + NAD(+). The catalysed reaction is a quinone + NADPH + H(+) = a quinol + NADP(+). This is NAD(P)H dehydrogenase (quinone) from Caulobacter vibrioides (strain ATCC 19089 / CIP 103742 / CB 15) (Caulobacter crescentus).